A 140-amino-acid polypeptide reads, in one-letter code: MEDPIKAIEEIFKKADQIFKFLDVKVINLEKGRAVVEIPYKEEFTRRGGVLHGGIIMSAIDITGGLAALTVNDAMDQVTQELKINFLEPMYKGPFTIEGKVLRKGSTVIVVEIEFKDADGKLGAKAIGSWYILRTKVQAK.

The protein belongs to the thioesterase PaaI family.

The sequence is that of Putative esterase SSO2140 from Saccharolobus solfataricus (strain ATCC 35092 / DSM 1617 / JCM 11322 / P2) (Sulfolobus solfataricus).